The following is a 277-amino-acid chain: Coiled-coil domain-containing protein 117 (277 aa).

Residues 1-69 are disordered; the sequence is MAALGRPFSG…GRVSIHCRKK (69 aa). Over residues 26–37 the composition is skewed to low complexity; sequence FAGRAFPPGAAG. The residue at position 47 (Arg-47) is an Omega-N-methylarginine. At Ser-52 the chain carries Phosphoserine. Over residues 58–69 the composition is skewed to basic residues; that stretch reads ARGRVSIHCRKK. Residues 139 to 166 adopt a coiled-coil conformation; the sequence is QCEVARRRLQEIEDRIIDEDEEVESDRN. The tract at residues 212 to 277 is disordered; sequence LPELLPEKPK…ATSTEEEMEL (66 aa).

In terms of assembly, interacts with CIAO2B; the interaction is direct. Interacts with MMS19; the interaction is indirect.

It localises to the cytoplasm. The protein localises to the cytoskeleton. Its subcellular location is the spindle. It is found in the nucleus. In terms of biological role, facilitates DNA repair, cell cycle progression, and cell proliferation through its interaction with CIAO2B. In Mus musculus (Mouse), this protein is Coiled-coil domain-containing protein 117.